The chain runs to 104 residues: Nucleoid-associated protein Ccon26_18480 (104 aa).

Positions 16-34 are enriched in basic and acidic residues; it reads DVQKQAKQMEEESKNKEFG. The disordered stretch occupies residues 16-38; that stretch reads DVQKQAKQMEEESKNKEFGAKSG.

Belongs to the YbaB/EbfC family. In terms of assembly, homodimer.

It localises to the cytoplasm. It is found in the nucleoid. In terms of biological role, binds to DNA and alters its conformation. May be involved in regulation of gene expression, nucleoid organization and DNA protection. The polypeptide is Nucleoid-associated protein Ccon26_18480 (Campylobacter concisus (strain 13826)).